A 151-amino-acid chain; its full sequence is Ubiquitin-conjugating enzyme E2 2 (151 aa).

The segment at 1–26 is disordered; sequence MSTSARRRLMRDFKRMQTDPPAGVSA. The 147-residue stretch at 4–150 folds into the UBC core domain; it reads SARRRLMRDF…VRETVEKSWE (147 aa). Cysteine 88 functions as the Glycyl thioester intermediate in the catalytic mechanism.

It belongs to the ubiquitin-conjugating enzyme family.

The protein resides in the cytoplasm. It is found in the nucleus. The catalysed reaction is S-ubiquitinyl-[E1 ubiquitin-activating enzyme]-L-cysteine + [E2 ubiquitin-conjugating enzyme]-L-cysteine = [E1 ubiquitin-activating enzyme]-L-cysteine + S-ubiquitinyl-[E2 ubiquitin-conjugating enzyme]-L-cysteine.. It participates in protein modification; protein ubiquitination. Catalyzes the covalent attachment of ubiquitin to other proteins. Plays a role in transcription regulation by catalyzing the monoubiquitination of histone H2B to form H2BK123ub1. H2BK123ub1 gives a specific tag for epigenetic transcriptional activation and is also a prerequisite for H3K4me and H3K79me formation. Also involved in postreplication repair of UV-damaged DNA, in N-end rule-dependent protein degradation and in sporulation. The protein is Ubiquitin-conjugating enzyme E2 2 (uvsJ) of Emericella nidulans (strain FGSC A4 / ATCC 38163 / CBS 112.46 / NRRL 194 / M139) (Aspergillus nidulans).